Here is a 402-residue protein sequence, read N- to C-terminus: Putative nickel insertion protein (402 aa).

The protein belongs to the LarC family.

The chain is Putative nickel insertion protein from Synechococcus elongatus (strain ATCC 33912 / PCC 7942 / FACHB-805) (Anacystis nidulans R2).